A 435-amino-acid chain; its full sequence is Trigger factor (435 aa).

A PPIase FKBP-type domain is found at 161–246; it reads DDQVTLDFEG…LTKVEEQILP (86 aa).

This sequence belongs to the FKBP-type PPIase family. Tig subfamily.

It is found in the cytoplasm. It catalyses the reaction [protein]-peptidylproline (omega=180) = [protein]-peptidylproline (omega=0). Its function is as follows. Involved in protein export. Acts as a chaperone by maintaining the newly synthesized protein in an open conformation. Functions as a peptidyl-prolyl cis-trans isomerase. This chain is Trigger factor, found in Psychromonas ingrahamii (strain DSM 17664 / CCUG 51855 / 37).